Here is a 328-residue protein sequence, read N- to C-terminus: tRNA uridine(34) hydroxylase (328 aa).

The Rhodanese domain occupies 130 to 224 (LDEDTVVLDT…YGKDPEVQGE (95 aa)). The active-site Cysteine persulfide intermediate is cysteine 184.

This sequence belongs to the TrhO family.

The catalysed reaction is uridine(34) in tRNA + AH2 + O2 = 5-hydroxyuridine(34) in tRNA + A + H2O. Catalyzes oxygen-dependent 5-hydroxyuridine (ho5U) modification at position 34 in tRNAs. The polypeptide is tRNA uridine(34) hydroxylase (Streptococcus pyogenes serotype M12 (strain MGAS2096)).